Consider the following 453-residue polypeptide: Phosphoglucosamine mutase (453 aa).

S102 (phosphoserine intermediate) is an active-site residue. Mg(2+) is bound by residues S102, D244, D246, and D248. Residue S102 is modified to Phosphoserine.

Belongs to the phosphohexose mutase family. Mg(2+) serves as cofactor. In terms of processing, activated by phosphorylation.

The catalysed reaction is alpha-D-glucosamine 1-phosphate = D-glucosamine 6-phosphate. Catalyzes the conversion of glucosamine-6-phosphate to glucosamine-1-phosphate. This Pelobacter propionicus (strain DSM 2379 / NBRC 103807 / OttBd1) protein is Phosphoglucosamine mutase.